The following is a 466-amino-acid chain: Signal recognition particle 54 kDa protein (466 aa).

Residues 104–111, 184–188, and 242–245 each bind GTP; these read GLQGSGKT, DTAGR, and TKLD. Positions 444–466 are disordered; it reads MQQGGGGGGGGGGGLGGMGPFGD. Positions 446-466 are enriched in gly residues; sequence QGGGGGGGGGGGLGGMGPFGD.

The protein belongs to the GTP-binding SRP family. SRP54 subfamily. Part of the signal recognition particle protein translocation system, which is composed of SRP and FtsY. Archaeal SRP consists of a 7S RNA molecule of 300 nucleotides and two protein subunits: SRP54 and SRP19.

The protein localises to the cytoplasm. It carries out the reaction GTP + H2O = GDP + phosphate + H(+). Functionally, involved in targeting and insertion of nascent membrane proteins into the cytoplasmic membrane. Binds to the hydrophobic signal sequence of the ribosome-nascent chain (RNC) as it emerges from the ribosomes. The SRP-RNC complex is then targeted to the cytoplasmic membrane where it interacts with the SRP receptor FtsY. This Natronomonas pharaonis (strain ATCC 35678 / DSM 2160 / CIP 103997 / JCM 8858 / NBRC 14720 / NCIMB 2260 / Gabara) (Halobacterium pharaonis) protein is Signal recognition particle 54 kDa protein.